A 171-amino-acid chain; its full sequence is Iron-sulfur cluster assembly protein 1 (171 aa).

Residues 1 to 55 constitute a mitochondrion transit peptide; sequence MLRAGGRRLLAPGLRRVLGGGAAAPVAVGGAKAYHERVVDHYENPRNVGSFENDD.

The protein belongs to the NifU family. Component of the core Fe-S cluster (ISC) assembly machinery. It depends on [2Fe-2S] cluster as a cofactor.

The protein resides in the mitochondrion matrix. It participates in cofactor biosynthesis; iron-sulfur cluster biosynthesis. Its function is as follows. Scaffold protein for the de novo synthesis of iron-sulfur (Fe-S) clusters within mitochondria, which is required for maturation of both mitochondrial and cytoplasmic [2Fe-2S] and [4Fe-4S] proteins. First, a [2Fe-2S] cluster is transiently assembled on the scaffold protein ISCU (ISU1, ISU2 or ISU3). In a second step, the cluster is released from ISCU, transferred to a glutaredoxin, followed by the formation of mitochondrial [2Fe-2S] proteins, the synthesis of [4Fe-4S] clusters and their target-specific insertion into the recipient apoproteins. Cluster assembly on ISCU depends on the function of the cysteine desulfurase complex NFS1-ISD11, which serves as the sulfur donor for cluster synthesis, the iron-binding protein frataxin as the putative iron donor, and the electron transfer chain comprised of ferredoxin reductase and ferredoxin, which receive their electrons from NADH. In Oryza sativa subsp. japonica (Rice), this protein is Iron-sulfur cluster assembly protein 1.